The primary structure comprises 248 residues: Ribonuclease PH (248 aa).

Phosphate-binding positions include R86 and G124–R126.

The protein belongs to the RNase PH family. As to quaternary structure, homohexameric ring arranged as a trimer of dimers.

The catalysed reaction is tRNA(n+1) + phosphate = tRNA(n) + a ribonucleoside 5'-diphosphate. In terms of biological role, phosphorolytic 3'-5' exoribonuclease that plays an important role in tRNA 3'-end maturation. Removes nucleotide residues following the 3'-CCA terminus of tRNAs; can also add nucleotides to the ends of RNA molecules by using nucleoside diphosphates as substrates, but this may not be physiologically important. Probably plays a role in initiation of 16S rRNA degradation (leading to ribosome degradation) during starvation. The chain is Ribonuclease PH from Listeria welshimeri serovar 6b (strain ATCC 35897 / DSM 20650 / CCUG 15529 / CIP 8149 / NCTC 11857 / SLCC 5334 / V8).